We begin with the raw amino-acid sequence, 244 residues long: Small ribosomal subunit protein eS4 (244 aa).

Residues 43-106 form the S4 RNA-binding domain; it reads LPLLLVVRDI…DENYLVLFDE (64 aa).

The protein belongs to the eukaryotic ribosomal protein eS4 family.

The protein is Small ribosomal subunit protein eS4 of Methanococcus maripaludis (strain C6 / ATCC BAA-1332).